Consider the following 387-residue polypeptide: TPR repeat-containing protein SYNPCC7002_A0425 (387 aa).

TPR repeat units lie at residues 63–96, 97–130, 132–164, 166–198, 200–232, 233–266, 267–300, 302–334, and 336–368; these read LNAL…EANN, ARIH…EDDN, EFFN…QPNN, AYSL…DSNN, MALQ…RPND, AELR…STRD, SAMQ…DPQS, EAFA…SPTD, and AAFY…YQQR.

This Picosynechococcus sp. (strain ATCC 27264 / PCC 7002 / PR-6) (Agmenellum quadruplicatum) protein is TPR repeat-containing protein SYNPCC7002_A0425.